The sequence spans 545 residues: Capsular polysaccharide phosphotransferase SacB (545 aa).

It belongs to the stealth family.

Functionally, may be the polymerase that links individual UDP-N-acetyl-D-mannosamine monomers. In serotype A the capsule is composed of repeated units of (alpha 1-6)-linked N-acetyl-D-mannosamine-1-phosphate. The protein is Capsular polysaccharide phosphotransferase SacB (sacB) of Neisseria meningitidis serogroup A.